We begin with the raw amino-acid sequence, 503 residues long: Splicing factor 3A subunit 3 (503 aa).

2 disordered regions span residues 296–317 (PALM…EHER) and 341–384 (ATKE…NPKN). The segment covering 358-377 (DDSDVEASESDNEDDPDADD) has biased composition (acidic residues). Phosphoserine occurs at positions 360, 365, and 367. A Matrin-type zinc finger spans residues 408-439 (YNCEICGNFTYKGPKAFQRHFAEWRHAHGMRC).

This sequence belongs to the SF3A3 family. As to quaternary structure, probable component of a the U2 small nuclear ribonucleoproteins complex (U2 snRNP). Ubiquitous. In ovaries and testes, it is expressed in all germ and somatic cells. Highly expressed in spermatogonias and spermatocytes. Highly expressed in the germ cells of larval testes, while it is weakly expressed in fat body cells, in polyploid nuclei of salivary glands, and in larval brain.

It localises to the nucleus. In terms of biological role, probable subunit of a splicing factor complex required for 'A' complex assembly formed by the stable binding of U2 snRNP to the branchpoint sequence (BPS) in pre-mRNA. Involved in male fertility. The sequence is that of Splicing factor 3A subunit 3 (noi) from Drosophila melanogaster (Fruit fly).